The sequence spans 234 residues: Glucosamine-6-phosphate deaminase (234 aa).

The Proton acceptor; for enolization step role is filled by Asp-62. Asn-128 (for ring-opening step) is an active-site residue. Catalysis depends on His-130, which acts as the Proton acceptor; for ring-opening step. The active-site For ring-opening step is the Glu-135.

This sequence belongs to the glucosamine/galactosamine-6-phosphate isomerase family. NagB subfamily.

The enzyme catalyses alpha-D-glucosamine 6-phosphate + H2O = beta-D-fructose 6-phosphate + NH4(+). It functions in the pathway amino-sugar metabolism; N-acetylneuraminate degradation; D-fructose 6-phosphate from N-acetylneuraminate: step 5/5. In terms of biological role, catalyzes the reversible isomerization-deamination of glucosamine 6-phosphate (GlcN6P) to form fructose 6-phosphate (Fru6P) and ammonium ion. The chain is Glucosamine-6-phosphate deaminase from Streptococcus pyogenes serotype M1.